Here is a 1337-residue protein sequence, read N- to C-terminus: DNA mismatch repair protein Msh6 (1337 aa).

Positions P68 to S130 constitute a PWWP domain. Positions A170–V310 are disordered. The segment covering S176–E187 has biased composition (acidic residues). Residues V226–S248 are compositionally biased toward basic and acidic residues. Positions D257–E272 are enriched in acidic residues. Residues P279–K292 are compositionally biased toward basic residues. Positions S294–K305 are enriched in basic and acidic residues. G1111–S1118 is an ATP binding site.

Belongs to the DNA mismatch repair MutS family.

The protein resides in the nucleus. Functionally, component of the post-replicative DNA mismatch repair system (MMR). Involved in B cell growth by positively regulating B cell proliferation and controlling replication efficiency. Controls cell cycle to prevent re-replication and defects in DNA damage-induced G2 checkpoint. Doesn't seem to counteract or control the immunoglobulin gene conversion (Ig GC) and to contribute to guanine/uracil mismatch repair. In Gallus gallus (Chicken), this protein is DNA mismatch repair protein Msh6.